A 431-amino-acid chain; its full sequence is uncharacterized protein (431 aa).

4Fe-4S ferredoxin-type domains follow at residues 336-367 (VRPVHHPERCTDCAVCLAARRCPTHAIDNGLD) and 362-391 (IDNGLDLDRCFGCGVCAWSCPSGAYEMDTG).

This is an uncharacterized protein from Methanothermobacter thermautotrophicus (strain ATCC 29096 / DSM 1053 / JCM 10044 / NBRC 100330 / Delta H) (Methanobacterium thermoautotrophicum).